Consider the following 279-residue polypeptide: Protoheme IX farnesyltransferase (279 aa).

Helical transmembrane passes span 5 to 25, 33 to 53, 84 to 103, 108 to 125, 133 to 153, 159 to 179, 201 to 221, 222 to 242, and 256 to 276; these read LILL…AGYL, IAQA…AAAF, LAYS…LLLG, LFVF…TVIL, ILGG…LGAG, AVLI…ALAY, AAVA…MTLY, LAFG…VATI, and AMWK…LALI.

This sequence belongs to the UbiA prenyltransferase family. Protoheme IX farnesyltransferase subfamily.

It is found in the cell membrane. The enzyme catalyses heme b + (2E,6E)-farnesyl diphosphate + H2O = Fe(II)-heme o + diphosphate. The protein operates within porphyrin-containing compound metabolism; heme O biosynthesis; heme O from protoheme: step 1/1. Its function is as follows. Converts heme B (protoheme IX) to heme O by substitution of the vinyl group on carbon 2 of heme B porphyrin ring with a hydroxyethyl farnesyl side group. The sequence is that of Protoheme IX farnesyltransferase from Pyrobaculum arsenaticum (strain DSM 13514 / JCM 11321 / PZ6).